A 350-amino-acid chain; its full sequence is Thymidine kinase (350 aa).

15–22 (GAHGLGKT) lines the ATP pocket. Glu44 (proton acceptor) is an active-site residue. Gln88 contributes to the substrate binding site. Arg178 serves as a coordination point for ATP. Arg184 is a binding site for substrate.

It belongs to the herpesviridae thymidine kinase family. Homodimer.

The enzyme catalyses thymidine + ATP = dTMP + ADP + H(+). Catalyzes the transfer of the gamma-phospho group of ATP to thymidine to generate dTMP in the salvage pathway of pyrimidine synthesis. The dTMP serves as a substrate for DNA polymerase during viral DNA replication. Allows the virus to be reactivated and to grow in non-proliferative cells lacking a high concentration of phosphorylated nucleic acid precursors. This chain is Thymidine kinase, found in Bos taurus (Bovine).